The following is a 597-amino-acid chain: Probable bifunctional ADP-ribose hydrolase/ADP-ribosyltransferase (597 aa).

In terms of domain architecture, Macro spans 99 to 299 (SRLIKHGDLG…FYSKLLGPSH (201 aa)). The ADP-D-ribose site is built by aspartate 118, isoleucine 119, and asparagine 133. Residues cysteine 139, histidine 144, and cysteine 146 each coordinate Zn(2+). 7 residues coordinate ADP-D-ribose: cysteine 146, isoleucine 147, aspartate 148, serine 244, threonine 245, glycine 246, and phenylalanine 248. One can recognise a Deacetylase sirtuin-type domain in the interval 307-597 (ENTPQGSLSL…IGRAIPLLLE (291 aa)). NAD(+) contacts are provided by residues alanine 333, 418 to 421 (SNAD), and glutamine 438. Zn(2+) is bound by residues cysteine 446, cysteine 450, cysteine 485, and cysteine 488. Valine 584 is an NAD(+) binding site.

It in the N-terminal section; belongs to the MacroD-type family. Zn-Macro subfamily. In the C-terminal section; belongs to the sirtuin family. Class M subfamily. As to quaternary structure, monomer. The cofactor is Zn(2+).

The enzyme catalyses 5-O-(ADP-D-ribosyl)-L-glutamyl-[protein] + H2O = L-glutamyl-[protein] + ADP-D-ribose + H(+). Functionally, is probably a bifunctional enzyme with ADP-ribosyltransferase and ADP-ribosylhydrolase activities. In vitro, can act as an ADP-ribosylhydrolase that hydrolyzes ADP-ribosyl-glutamate bonds. It can remove the ADP-ribosyl modification from the human mono-ADP-ribosylated PARP1 E988Q mutant, which is primarily modified on glutamate site with only minor aspartate contribution. It cannot hydrolyze the ADP-ribosyl-arpartate bond in ribosylated S.pyogenes GcvH-L. This chain is Probable bifunctional ADP-ribose hydrolase/ADP-ribosyltransferase, found in Fusarium oxysporum f. sp. cubense.